The chain runs to 413 residues: Cell division protein FtsZ 2 (413 aa).

GTP is bound by residues 130–132, E169, R173, and D216; that span reads GTG.

Belongs to the FtsZ family. As to quaternary structure, homodimer. Polymerizes to form a dynamic ring structure in a strictly GTP-dependent manner. Interacts directly with several other division proteins.

It is found in the cytoplasm. Its function is as follows. Essential cell division protein that forms a contractile ring structure (Z ring) at the future cell division site. The regulation of the ring assembly controls the timing and the location of cell division. One of the functions of the FtsZ ring is to recruit other cell division proteins to the septum to produce a new cell wall between the dividing cells. Binds GTP and shows GTPase activity. The chain is Cell division protein FtsZ 2 from Pyrococcus abyssi (strain GE5 / Orsay).